The sequence spans 260 residues: MAQEPILTARGLVKRYGRVTALDRADFDLYPGEILAVIGDNGAGKSSMIKAISGAVTPDEGEIRLEGKPIQFRSPMEARQAGIETVYQNLALSPALSIADNMFLGREIRKPGIMGKWFRSLDRAAMEKQARAKLSELGLMTIQNINQAVETLSGGQRQGVAVARAAAFGSKVVIMDEPTAALGVKESRRVLELILDVRRRGLPIVLISHNMPHVFEVADRIHIHRLGRRLCVINPKDYTMSDAVAFMTGAKEPPREAIAA.

The region spanning 7–251 (LTARGLVKRY…DAVAFMTGAK (245 aa)) is the ABC transporter domain. 39–46 (GDNGAGKS) provides a ligand contact to ATP.

Belongs to the ABC transporter superfamily. The complex is composed of two ATP-binding proteins (FrcA), two transmembrane proteins (FrcC) and a solute-binding protein (FrcB).

Its subcellular location is the cell inner membrane. It carries out the reaction D-fructose(out) + ATP + H2O = D-fructose(in) + ADP + phosphate + H(+). In terms of biological role, part of the high-affinity ABC transporter complex FrcBCA involved in fructose uptake. Is also a high-affinity transporter for ribose and mannose. Responsible for energy coupling to the transport system. This Rhizobium meliloti (Ensifer meliloti) protein is Fructose import ATP-binding protein FrcA.